The primary structure comprises 20 residues: 23 kDa cell wall protein (20 aa).

It is found in the secreted. It localises to the cell wall. The sequence is that of 23 kDa cell wall protein from Solanum lycopersicum (Tomato).